An 82-amino-acid polypeptide reads, in one-letter code: Cytochrome c-551 (82 aa).

Cysteine 12, cysteine 15, histidine 16, and methionine 61 together coordinate heme c.

Post-translationally, binds 1 heme c group covalently per subunit.

The protein is Cytochrome c-551 of Azotobacter vinelandii.